Consider the following 145-residue polypeptide: MSKLAVSSSFSLLCGNCKRGHVGLECYSDVPTNNLLSNEHLHSLESFVNEVSSEWCCHLVDGNTLAIFLPFDQSTWNLSKGAFVSLLEFCEDNLPIKRILLCLNKINVDETVVSCFKYLGFSPLHPHLYPSCIDSQGVFVMVYSM.

This sequence belongs to the ODC antizyme family. As to quaternary structure, interacts with ODC1 and thereby sterically blocks ODC homodimerization.

Functionally, ornithine decarboxylase (ODC) antizyme protein that negatively regulates ODC activity and intracellular polyamine biosynthesis and uptake in response to increased intracellular polyamine levels. Binds to ODC monomers, inhibiting the assembly of the functional ODC homodimer, and targets the monomers for ubiquitin-independent proteolytic destruction by the 26S proteasome. The polypeptide is Ornithine decarboxylase antizyme (Onchocerca volvulus).